Reading from the N-terminus, the 128-residue chain is Protein FAM229A (128 aa).

The tract at residues 1–96 (MQSSPSTLGP…VATDQNPVRP (96 aa)) is disordered.

It belongs to the FAM229 family.

The protein is Protein FAM229A (Fam229a) of Mus musculus (Mouse).